The following is a 205-amino-acid chain: Spermatogenesis-associated protein 24 (205 aa).

A coiled-coil region spans residues 17 to 166 (LAFDQLRDVI…QQKQIFRNHM (150 aa)). Residues 138–185 (EDILNGKENEIKELQQVISQQKQIFRNHMSDFRIQKQQESYMAQVLDQ) are required for interaction with CBX5 and TBPL1. The interval 180–205 (AQVLDQKHKKASGTRQAHSHQHPREK) is disordered. Residues 186–205 (KHKKASGTRQAHSHQHPREK) show a composition bias toward basic residues.

It belongs to the SPATA24 family. Homodimer. Interacts with CBX3, CBX5, GMNN, GTF2B, TBPL1 and the polycomb proteins PHCF2, RNF2 and SCMH1 but not with CBX1 or PCGF2.

It is found in the cytoplasm. The protein localises to the nucleus. Its subcellular location is the nucleolus. The protein resides in the nucleoplasm. In terms of biological role, binds DNA with high affinity but does not bind to TATA boxes. Synergises with GMNN and TBP in activation of TATA box-containing promoters and with GMNN and TBPL1 in activation of the NF1 TATA-less promoter. May play a role in cytoplasm movement and removal during spermiogenesis. This Macaca fascicularis (Crab-eating macaque) protein is Spermatogenesis-associated protein 24 (SPATA24).